The following is a 473-amino-acid chain: Lactate utilization protein B (473 aa).

2 4Fe-4S ferredoxin-type domains span residues 303–333 (GTAF…GHSY) and 352–381 (YDDY…LHEL). Positions 312, 315, 318, 322, 365, 368, and 372 each coordinate [4Fe-4S] cluster.

Belongs to the LutB/YkgF family.

Functionally, is involved in L-lactate degradation and allows cells to grow with lactate as the sole carbon source. Has probably a role as an electron transporter during oxidation of L-lactate. This Bacillus pumilus (strain SAFR-032) protein is Lactate utilization protein B.